We begin with the raw amino-acid sequence, 130 residues long: Small ribosomal subunit protein uS9 (130 aa).

It belongs to the universal ribosomal protein uS9 family.

The chain is Small ribosomal subunit protein uS9 from Shewanella loihica (strain ATCC BAA-1088 / PV-4).